The chain runs to 75 residues: Large ribosomal subunit protein uL24c (75 aa).

Belongs to the universal ribosomal protein uL24 family. In terms of assembly, part of the 50S ribosomal subunit.

Its subcellular location is the plastid. The protein resides in the chloroplast. Functionally, one of two assembly initiator proteins, it binds directly to the 5'-end of the 23S rRNA, where it nucleates assembly of the 50S subunit. This Cyanidioschyzon merolae (strain NIES-3377 / 10D) (Unicellular red alga) protein is Large ribosomal subunit protein uL24c (rpl24).